The sequence spans 355 residues: Serum paraoxonase/arylesterase 1 (355 aa).

Residues cysteine 42 and cysteine 353 are joined by a disulfide bond. 2 residues coordinate Ca(2+): glutamate 53 and aspartate 54. Histidine 115 acts as the Proton acceptor in catalysis. 4 residues coordinate Ca(2+): isoleucine 117, asparagine 168, aspartate 169, and asparagine 224. Asparagine 253 carries N-linked (GlcNAc...) asparagine glycosylation. Positions 269 and 270 each coordinate Ca(2+). N-linked (GlcNAc...) asparagine glycosylation is found at asparagine 270 and asparagine 324.

This sequence belongs to the paraoxonase family. Homodimer. Heterooligomer with phosphate-binding protein (HPBP). Interacts with CLU. Ca(2+) serves as cofactor. Glycosylated. Post-translationally, the signal sequence is not cleaved. In terms of processing, present in two forms, form B contains a disulfide bond, form A does not. Plasma, associated with HDL (at protein level). Expressed in liver, but not in heart, brain, placenta, lung, skeletal muscle, kidney or pancreas.

It localises to the secreted. It is found in the extracellular space. The catalysed reaction is a phenyl acetate + H2O = a phenol + acetate + H(+). It carries out the reaction An aryl dialkyl phosphate + H2O = dialkyl phosphate + an aryl alcohol.. It catalyses the reaction an N-acyl-L-homoserine lactone + H2O = an N-acyl-L-homoserine + H(+). In terms of biological role, hydrolyzes the toxic metabolites of a variety of organophosphorus insecticides. Capable of hydrolyzing a broad spectrum of organophosphate substrates and lactones, and a number of aromatic carboxylic acid esters. Mediates an enzymatic protection of low density lipoproteins against oxidative modification and the consequent series of events leading to atheroma formation. The polypeptide is Serum paraoxonase/arylesterase 1 (PON1) (Homo sapiens (Human)).